The primary structure comprises 111 residues: Ribosome-binding factor A (111 aa).

This sequence belongs to the RbfA family. Monomer. Binds 30S ribosomal subunits, but not 50S ribosomal subunits or 70S ribosomes.

Its subcellular location is the cytoplasm. Its function is as follows. One of several proteins that assist in the late maturation steps of the functional core of the 30S ribosomal subunit. Associates with free 30S ribosomal subunits (but not with 30S subunits that are part of 70S ribosomes or polysomes). Required for efficient processing of 16S rRNA. May interact with the 5'-terminal helix region of 16S rRNA. The polypeptide is Ribosome-binding factor A (Helicobacter acinonychis (strain Sheeba)).